The primary structure comprises 482 residues: 2-succinylbenzoate--CoA ligase (482 aa).

Belongs to the ATP-dependent AMP-binding enzyme family. MenE subfamily.

It carries out the reaction 2-succinylbenzoate + ATP + CoA = 2-succinylbenzoyl-CoA + AMP + diphosphate. It participates in quinol/quinone metabolism; 1,4-dihydroxy-2-naphthoate biosynthesis; 1,4-dihydroxy-2-naphthoate from chorismate: step 5/7. It functions in the pathway quinol/quinone metabolism; menaquinone biosynthesis. Converts 2-succinylbenzoate (OSB) to 2-succinylbenzoyl-CoA (OSB-CoA). This is 2-succinylbenzoate--CoA ligase from Bacillus cereus (strain ZK / E33L).